We begin with the raw amino-acid sequence, 318 residues long: NADH-ubiquinone oxidoreductase chain 1 (318 aa).

The next 8 membrane-spanning stretches (helical) occupy residues 2–22 (FLMN…FLTL), 70–90 (MFIL…IPMP), 100–120 (LGVL…LWSG), 136–156 (VAQT…IMML), 171–191 (HLWL…STLA), 231–251 (IIMM…NPLF), 253–273 (ELFT…FLWV), and 294–314 (LPLT…LAGI).

Belongs to the complex I subunit 1 family.

It localises to the mitochondrion inner membrane. The catalysed reaction is a ubiquinone + NADH + 5 H(+)(in) = a ubiquinol + NAD(+) + 4 H(+)(out). Its function is as follows. Core subunit of the mitochondrial membrane respiratory chain NADH dehydrogenase (Complex I) that is believed to belong to the minimal assembly required for catalysis. Complex I functions in the transfer of electrons from NADH to the respiratory chain. The immediate electron acceptor for the enzyme is believed to be ubiquinone. In Priodontes maximus (Giant armadillo), this protein is NADH-ubiquinone oxidoreductase chain 1 (MT-ND1).